Reading from the N-terminus, the 115-residue chain is uncharacterized protein (115 aa).

This is an uncharacterized protein from Acanthamoeba polyphaga (Amoeba).